We begin with the raw amino-acid sequence, 205 residues long: MKKIVLLVTLVFSINYSFANASDDLINKIKNIHSMSASFDQKLINGGRASDNISSKGYMSLKKPKFFRWITTTPNNQEIISNGSKLWIYDGDLEQVIIKKVSNNIAQFPYLILLSKNTDNINKLFTVKELDKNTYLLKPKNDQMIDSIQIKFSDNENLEYLAISTSLNQFTKISFSDVKTDIDIDNNKFDFKIPDDTDVIDETKD.

Residues 1–21 (MKKIVLLVTLVFSINYSFANA) form the signal peptide.

This sequence belongs to the LolA family. Monomer.

It localises to the periplasm. In terms of biological role, participates in the translocation of lipoproteins from the inner membrane to the outer membrane. Only forms a complex with a lipoprotein if the residue after the N-terminal Cys is not an aspartate (The Asp acts as a targeting signal to indicate that the lipoprotein should stay in the inner membrane). In Francisella philomiragia subsp. philomiragia (strain ATCC 25017 / CCUG 19701 / FSC 153 / O#319-036), this protein is Outer-membrane lipoprotein carrier protein.